A 692-amino-acid polypeptide reads, in one-letter code: Elongation factor G (692 aa).

The tr-type G domain occupies 8–282 (ERTRNIGIMA…AIVDYLPAPT (275 aa)). Residues 17 to 24 (AHIDAGKT), 81 to 85 (DTPGH), and 135 to 138 (NKMD) each bind GTP.

Belongs to the TRAFAC class translation factor GTPase superfamily. Classic translation factor GTPase family. EF-G/EF-2 subfamily.

The protein localises to the cytoplasm. Its function is as follows. Catalyzes the GTP-dependent ribosomal translocation step during translation elongation. During this step, the ribosome changes from the pre-translocational (PRE) to the post-translocational (POST) state as the newly formed A-site-bound peptidyl-tRNA and P-site-bound deacylated tRNA move to the P and E sites, respectively. Catalyzes the coordinated movement of the two tRNA molecules, the mRNA and conformational changes in the ribosome. In Desulforamulus reducens (strain ATCC BAA-1160 / DSM 100696 / MI-1) (Desulfotomaculum reducens), this protein is Elongation factor G.